Consider the following 155-residue polypeptide: uncharacterized protein (155 aa).

Disordered regions lie at residues 1-22 and 108-155; these read MSSQKGNVTRSRPQKHQNTFTF and PFNK…DTQA. S2 is modified (N-acetylserine). S136, S144, and S146 each carry phosphoserine. A compositionally biased stretch (acidic residues) spans 136–155; sequence SDEDLDAESDSEGEDEDTQA.

This is an uncharacterized protein from Rattus norvegicus (Rat).